Reading from the N-terminus, the 432-residue chain is D-amino acid dehydrogenase (432 aa).

3–17 provides a ligand contact to FAD; sequence VLVLGSGVIGTTTAY.

Belongs to the DadA oxidoreductase family. FAD serves as cofactor.

The enzyme catalyses a D-alpha-amino acid + A + H2O = a 2-oxocarboxylate + AH2 + NH4(+). It functions in the pathway amino-acid degradation; D-alanine degradation; NH(3) and pyruvate from D-alanine: step 1/1. In terms of biological role, oxidative deamination of D-amino acids. In Azotobacter vinelandii (strain DJ / ATCC BAA-1303), this protein is D-amino acid dehydrogenase.